Here is a 2176-residue protein sequence, read N- to C-terminus: MSSAHPKGDSKEPPKHGNSKEKPNYGQSQYSYSAMSNLVTQADRRFVSRRDAEPTGEPESLVNRVSIADMGSRARIEKPSTLPLELTQEVQEVRLPRKDAESLEIGIRQPEREKRSSAILKYFDSFEILKYNPLTDETREVYDYILSFIQQYLGDQSPEILRSAADLIIELLKDSSLDEQGRKKQIEEVLSTELPQDRFSQLVNLGNRLTDYTVEQEEELNEEGVNESGVPVLFNEADEEEEAVEAMEEDEVAEDEDVVLETSISQEEEKKNIENPDTEVTFISADTKKVTEIPTVHPREIDAFWLQREIAKYFADAVVCQEKTNQAFEALSADYDLGELENELMSIFDYEHFYLVQLLTKNRWTIVSCTMLKRAATDEERLGVEEQIRAAGRSWILEALRPGAITIPDDGLNELNNNVVEKAEPAPVSEIPLSKTLTSHKIVPKHQVDLENYVFTEGSRLMSNKAVKLPEGSFRRTGKGYEEIHVPAPNKAVLGADERLVKIKELPEWSHQAFLNTQSLNRIQSHLYPIAFGTDENILLCAPTGAGKTNVAMLCILNELQKHLREDLSFNLQNFKIVYIAPLKALVQEMVNNFSKRLTPYNIRVAELTGDSQLTKQQISETQIIVTTPEKWDIITRKANDLSYVNLVRLVIIDEVHLLHDERGPVLESIVARIFRHQEETLEQVRLVGLSATLPNYTDVASFLHVDPKKGLFYFDSTYRPCPLKQEFIGITEKTPFKRMQTTNEACYEKVMQHAGKNQVLIFVHSRKETAKTARFIRDKALEEETIGHLLRSDAASREILRAEADSTSDENLKDLLPYGFAIHHAGMRREDRQTSEDLFADGTIQVLVSTATLAWGVNLPAHTVIIKGTQVYSPEKGIWTELSPQDVLQMLGRAGRPQFDTYGEGIIITAHSELQYYLSLMNQQLPIESQFMRRLADCLNAEVSLGTVRSIEDGVDWLGYTYLYVRMLRSPALYSVGPEYDDDKYLVQKRADLLHSAAILLEKCKLLVYNRQSGTLTATELGKVAASYYVTHNSMAIYNRLLMQTTSFIELFRVFSFSDEFKHIPVREEEKVELAKLLERVPIPIRERLDEPAAKINALLQSYISRQRLDGFALVADMVYVTQSAGRIMRAIFEISLRRGWSSVATLSLDTCKMIEKRLWPTMSPLRQFPNCPSEVIRRVEKKEFPWQRYFDLDPAELGELVGVPKEGRRVYNMVQSFPRLSVEAHVQPITRSLVRVELVINSQFNWDDHLSGTSEAFWILVEDVDGDRLLHYEQFFLLKKYKDDEHIVNFTVPLLEPLPPCYFIKIVSDRWLHSITKVPLSFQRLIMPEKFPAPTPLLDLQNAPVSSLNNPSFISLYPNFKFFNKIQTQVFNSVYKTNDSVFIGAPNGSGKTVCAELALLHHWSQEDYGTAVYIAPIQEIVDRRYEEWYGKFSDLGDGKVLVKLTGERSQDLKLIQVADLIFCTPSQWDSLSKRWRSMRSIQKVDFYICDELQLLGGFYGPLYEIVISRIRYMAVQLEKNIRVVGLSVSVANARDLGEWLGTSPQCIFNFSPKDRPNPLTIHLQSFSITHFPSLMLAMSKPIYRSLKNFISQRKSTIVFTPDRKVAKQLAFDLVTFSMADEDEYLFSLMENEAFNKVEDAALQQSLKHGIAYISEITSSNDQNIVQYLYRHGLIKVLIASRDVIYSLKAKSNAVIVMGTQYYDGKEHRYIDYPISELLQMLGFTASIGSSELSQVILMTVTTKKEYYKKFLNEPLPMESHLQVWLHDAFVSEISTQTIESKQDAVDWLTWSYMYRRLVANPAYYGLQDITHESVSEFLSDLVETTMNDLSEARLITVDDEDDSCVALNLAMIASHYGITYITMQTFALSLSERTKMKGLLEIVTSAAEYEQLPIRKYEDIVLERIHSRLPVRLSNPNYEDPHTKSFILLAAHFSRFELPPGLVIDQKFILTRVHNLLGACVDTLSSEGHLIACIRPMEMSQMVTQALWDRDSPLKQIPYFDDALIERCNKEGVHDVFDIIDLDDEKRTELLHMDNAHLAKCAEFINKYPDIDIDFEIEDSEDVHANSPSVLIVQLTRELEEDEEVDTTVIAPYFPAQKTEHWWLVISDDKTLLAIKKITLGRSLTTKMEFVPPAMGTLKYKLSCFSDSYMGVDYEKEFECNVLEPLDTEMEDGE.

The span at 1–23 shows a compositional bias: basic and acidic residues; that stretch reads MSSAHPKGDSKEPPKHGNSKEKP. The tract at residues 1–34 is disordered; it reads MSSAHPKGDSKEPPKHGNSKEKPNYGQSQYSYSA. Positions 25-34 are enriched in polar residues; the sequence is YGQSQYSYSA. In terms of domain architecture, Helicase ATP-binding 1 spans 529–712; the sequence is PIAFGTDENI…FLHVDPKKGL (184 aa). 542 to 549 provides a ligand contact to ATP; it reads APTGAGKT. The DEAH box motif lies at 654-657; the sequence is DEVH. In terms of domain architecture, Helicase C-terminal 1 spans 723–956; that stretch reads PLKQEFIGIT…GTVRSIEDGV (234 aa). The region spanning 1019–1324 is the SEC63 1 domain; the sequence is ATELGKVAAS…HSITKVPLSF (306 aa). The Helicase ATP-binding 2 domain maps to 1374–1550; it reads NSVYKTNDSV…WLGTSPQCIF (177 aa). 1387–1394 is a binding site for ATP; the sequence is APNGSGKT. The 185-residue stretch at 1587–1771 folds into the Helicase C-terminal 2 domain; the sequence is SLKNFISQRK…HLQVWLHDAF (185 aa). Residues 1848–2162 form the SEC63 2 domain; the sequence is ALNLAMIASH…GVDYEKEFEC (315 aa).

Belongs to the 40S cdc5-associated complex (or cwf complex), a spliceosome sub-complex reminiscent of a late-stage spliceosome composed of the U2, U5 and U6 snRNAs and at least brr2, cdc5, cwf2/prp3, cwf3/syf1, cwf4/syf3, cwf5/ecm2, spp42/cwf6, cwf7/spf27, cwf8, cwf9, cwf10, cwf11, cwf12, prp45/cwf13, cwf14, cwf15, cwf16, cwf17, cwf18, cwf19, cwf20, cwf21, cwf22, cwf23, cwf24, cwf25, cwf26, cyp7/cwf27, cwf28, cwf29/ist3, lea1, msl1, prp5/cwf1, prp10, prp12/sap130, prp17, prp22, sap61, sap62, sap114, sap145, slu7, smb1, smd1, smd3, smf1, smg1 and syf2. Interacts with prp1. Interacts with tls1.

It localises to the cytoplasm. The protein localises to the nucleus. The enzyme catalyses ATP + H2O = ADP + phosphate + H(+). Involved in pre-mRNA splicing. May be involved in endoplasmic reticulum-associated protein degradation (ERAD) and required for growth at low and high temperatures. Required for pre-spliceosome formation, which is the first step of pre-mRNA splicing. This protein is associated with snRNP U5. Has a role in branch site-3' splice site selection. Associates with the branch site-3' splice 3'-exon region. The chain is Pre-mRNA-splicing factor brr2 (brr2) from Schizosaccharomyces pombe (strain 972 / ATCC 24843) (Fission yeast).